Here is a 192-residue protein sequence, read N- to C-terminus: ADP-ribose glycohydrolase AF_1521 (192 aa).

The region spanning 1 to 192 is the Macro domain; the sequence is MEVLFEAKVG…VALKVFERSL (192 aa). Substrate is bound by residues 19-21, 32-34, 39-44, and 140-146; these read GDI, AAN, HGGGVA, and VSAGIYG.

The enzyme catalyses 5-O-(ADP-D-ribosyl)-L-glutamyl-[protein] + H2O = L-glutamyl-[protein] + ADP-D-ribose + H(+). It carries out the reaction 4-O-(ADP-D-ribosyl)-L-aspartyl-[protein] + H2O = L-aspartyl-[protein] + ADP-D-ribose + H(+). It catalyses the reaction alpha-NAD(+) + H2O = ADP-D-ribose + nicotinamide + H(+). Removes ADP-ribose from aspartate and glutamate residues in proteins bearing a single ADP-ribose moiety. Inactive towards proteins bearing poly-ADP-ribose. Catalyzes removal of a phosphate group from ADP-ribose 1''-phosphate (Appr1p), but with low efficiency. The sequence is that of ADP-ribose glycohydrolase AF_1521 from Archaeoglobus fulgidus (strain ATCC 49558 / DSM 4304 / JCM 9628 / NBRC 100126 / VC-16).